A 1356-amino-acid polypeptide reads, in one-letter code: MAQSFTGKKRIRKSFGRIPEAVQMPNLIEVQRSSYEQFLQREVRAGERRDEGIEAVFKSVFPIKDFNERAVLEYVSYEFEEPKYDVEECVQRDMTYAAPLKVKLRLIVFETDEETGARSVKDIKEQDVYMGDIPLMTEKGTFIVNGTQRVIVSQMHRSPGVFFDHDKGKTHASGKLLFAARVIPYRGSWLDFEFDAKDIVYVRIDRRRKLPATTFLMALGMDGEEILSTFYETVPYEKKGDGWATPYKPERWRGVKPEFPLIDADTGEEIAPAGQKISARNAKKFADNGLKTLLLAPEALTGRYLAKDLVNFETGEIYAEAGDELDPTLLAALEEQGFTTLDVLDIDEVTVGAYIRNTLRVDKNTAREDALFDIYRVMRPGEPPTVEAAEAMFKSLFFDSERYDLSSVGRVKMNMRLELDCPDDVRVIRKEDVIAVLLTLVGLRDGRGEIDDIDNLGNRRVRSVGELLENQYRVGLLRMERAIKERMSSVDIDTVMPHDLINAKPAAAAVREFFGSSQLSQFMDQTNPLSEITHKRRLSALGPGGLTRERAGFEVRDVHPTHYGRICPIETPEGPNIGLINSLATHAVVNKYGFIESPYRRIRDGKTTDEVVYMSAMEEAKHVIAQANIKLENGEIVEDLVPGRINGEPSLLPKADVDLMDVSPKQVVSVAASLIPFLENDDANRALMGSNMQKQAVPLIQSDAPLVGTGMESIVAVDSGAVVVARRTGVVEQIDGTRIVVRATEETDPSKPGVDIYRLQKFQRSNTSTCINQRPLVRVGDKINAGDVIADGPSTELGELALGRNALVAFMPWNGYNFEDSILISERIVRDDVFTSIHIEEFEVMARDTKLGPEEITRDIPNVGEEALRNLDEAGIVAIGAEVQPGDILVGKVTPKGESPMTPEEKLLRAIFGEKASDVRDTSLRLPPGVSGTIVEVRVFNRHGVDKDERALAIERAEIDRLGKDRDDEFAILNRNMQGRLRQLLVGKTAVSGPKGLGRGEITAEKLEEIAPGLWWQIALDDEKAMGELEALRKQFDDARKRLDRRFEDKVDKLQRGDELPPGVMKMVKVFVAVKRKLQPGDKMAGRHGNKGVISKILPIEDMPYLEDGTSVDIVLNPLGVPSRMNVGQIFETHLGWAAAGLGKQVQRLLEDWQHGGQKQALIEHLRDVYGPDEELPDTEEELVELARNLSKGIPFATPVFDGAHIDDIENLLEKAGLDRSGQSYLYDGQSGERFKRPVTVGYIYMLKLHHLVDDKIHARSIGPYSLVTQQPLGGKAQFGGQRFGEMEVWALEAYGAAYTLQEMLTVKSDDVAGRTKVYESIVRGDDTFEAGIPESFNVLVKEMRSLGLNVELENS.

This sequence belongs to the RNA polymerase beta chain family. The RNAP catalytic core consists of 2 alpha, 1 beta, 1 beta' and 1 omega subunit. When a sigma factor is associated with the core the holoenzyme is formed, which can initiate transcription.

The enzyme catalyses RNA(n) + a ribonucleoside 5'-triphosphate = RNA(n+1) + diphosphate. Functionally, DNA-dependent RNA polymerase catalyzes the transcription of DNA into RNA using the four ribonucleoside triphosphates as substrates. This chain is DNA-directed RNA polymerase subunit beta, found in Phenylobacterium zucineum (strain HLK1).